The following is a 935-amino-acid chain: Isoleucine--tRNA ligase (935 aa).

The 'HIGH' region signature appears at Pro58 to His68. Glu558 provides a ligand contact to L-isoleucyl-5'-AMP. A 'KMSKS' region motif is present at residues Lys599 to Ser603. Lys602 contributes to the ATP binding site. The Zn(2+) site is built by Cys897, Cys900, Cys917, and Cys920.

Belongs to the class-I aminoacyl-tRNA synthetase family. IleS type 1 subfamily. As to quaternary structure, monomer. Zn(2+) is required as a cofactor.

The protein localises to the cytoplasm. It catalyses the reaction tRNA(Ile) + L-isoleucine + ATP = L-isoleucyl-tRNA(Ile) + AMP + diphosphate. Its function is as follows. Catalyzes the attachment of isoleucine to tRNA(Ile). As IleRS can inadvertently accommodate and process structurally similar amino acids such as valine, to avoid such errors it has two additional distinct tRNA(Ile)-dependent editing activities. One activity is designated as 'pretransfer' editing and involves the hydrolysis of activated Val-AMP. The other activity is designated 'posttransfer' editing and involves deacylation of mischarged Val-tRNA(Ile). This is Isoleucine--tRNA ligase from Francisella tularensis subsp. holarctica (strain OSU18).